The following is a 203-amino-acid chain: MPIGVPKVPFRLPGEEDAVWIDVYNRLYRERLLFLGQQVDDEIANQLIGIMMYLNGEDESKDMYLYINSPGGAVLAGISVYDAMQFVVPDVHTICMGLAASMGSFILTGGEITKRIALPHARVMIHQPASSYYDGQAGECIMEAEEVLKLRDCITKVYVQRTGKPLWVISEDMERDVFMSAKEAKLYGIVDLVAIENNSTIKN.

Ser-101 functions as the Nucleophile in the catalytic mechanism. His-126 is an active-site residue.

This sequence belongs to the peptidase S14 family. In terms of assembly, component of the chloroplastic Clp protease core complex.

The protein localises to the plastid. The protein resides in the chloroplast stroma. It carries out the reaction Hydrolysis of proteins to small peptides in the presence of ATP and magnesium. alpha-casein is the usual test substrate. In the absence of ATP, only oligopeptides shorter than five residues are hydrolyzed (such as succinyl-Leu-Tyr-|-NHMec, and Leu-Tyr-Leu-|-Tyr-Trp, in which cleavage of the -Tyr-|-Leu- and -Tyr-|-Trp bonds also occurs).. Its function is as follows. Cleaves peptides in various proteins in a process that requires ATP hydrolysis. Has a chymotrypsin-like activity. Plays a major role in the degradation of misfolded proteins. In Marchantia polymorpha (Common liverwort), this protein is ATP-dependent Clp protease proteolytic subunit.